Here is a 321-residue protein sequence, read N- to C-terminus: Isopenicillin N synthase (321 aa).

The disordered stretch occupies residues M1–G42. Residues R87, Y91, and Y188 each coordinate isopenicillin N. N-[(5S)-5-amino-5-carboxypentanoyl]-L-cysteinyl-D-valine-binding residues include R87, Y91, Y188, H213, and D215. Positions T179–A287 constitute a Fe2OG dioxygenase domain. Residues H213, D215, and H269 each coordinate Fe(2+). R278 is a 2-oxoglutarate binding site. S280 contributes to the isopenicillin N binding site. Residue S280 coordinates N-[(5S)-5-amino-5-carboxypentanoyl]-L-cysteinyl-D-valine.

It belongs to the iron/ascorbate-dependent oxidoreductase family. Fe cation is required as a cofactor. Requires L-ascorbate as cofactor.

The catalysed reaction is N-[(5S)-5-amino-5-carboxypentanoyl]-L-cysteinyl-D-valine + O2 = isopenicillin N + 2 H2O. It functions in the pathway antibiotic biosynthesis; penicillin G biosynthesis; penicillin G from L-alpha-aminoadipate and L-cysteine and L-valine: step 2/3. Functionally, removes, in the presence of oxygen, 4 hydrogen atoms from delta-L-(alpha-aminoadipyl)-L-cysteinyl-D-valine (ACV) to form the azetidinone and thiazolidine rings of isopenicillin. The polypeptide is Isopenicillin N synthase (pcbC) (Streptantibioticus cattleyicolor (Streptomyces cattleya)).